A 499-amino-acid polypeptide reads, in one-letter code: Maturase K (499 aa).

It belongs to the intron maturase 2 family. MatK subfamily.

The protein localises to the plastid. Its subcellular location is the chloroplast. In terms of biological role, usually encoded in the trnK tRNA gene intron. Probably assists in splicing its own and other chloroplast group II introns. The polypeptide is Maturase K (Gleditsia triacanthos (Common honey-locust)).